The following is a 335-amino-acid chain: Peroxidase 53 (335 aa).

Positions 1 to 30 are cleaved as a signal peptide; it reads MAVTNLPTCDGLFIISLIVIVSSIFGTSSA. Q31 is modified (pyrrolidone carboxylic acid). N-linked (GlcNAc...) asparagine glycans are attached at residues N33 and N43. 4 disulfide bridges follow: C41/C121, C74/C79, C127/C329, and C206/C238. H72 acts as the Proton acceptor in catalysis. The Ca(2+) site is built by D73, V76, G78, D80, and S82. Residue N165 is glycosylated (N-linked (GlcNAc...) asparagine). Residue P169 participates in substrate binding. A glycan (N-linked (GlcNAc...) asparagine) is linked at N177. Position 199 (H199) interacts with heme b. T200 is a Ca(2+) binding site. N215, N227, and N241 each carry an N-linked (GlcNAc...) asparagine glycan. Positions 251, 254, and 259 each coordinate Ca(2+). N-linked (GlcNAc...) asparagine glycosylation occurs at N297.

This sequence belongs to the peroxidase family. Classical plant (class III) peroxidase subfamily. Requires Ca(2+) as cofactor. Heme b serves as cofactor. As to expression, mainly expressed in roots.

It is found in the secreted. It carries out the reaction 2 a phenolic donor + H2O2 = 2 a phenolic radical donor + 2 H2O. Removal of H(2)O(2), oxidation of toxic reductants, biosynthesis and degradation of lignin, suberization, auxin catabolism, response to environmental stresses such as wounding, pathogen attack and oxidative stress. These functions might be dependent on each isozyme/isoform in each plant tissue. Functionally, closely linked to lignin formation by showing monolignol substrate specificity. This Arabidopsis thaliana (Mouse-ear cress) protein is Peroxidase 53 (PER53).